Consider the following 153-residue polypeptide: Nucleoside diphosphate kinase (153 aa).

Residues K9, F57, R85, T91, R102, and N112 each coordinate ATP. H115 serves as the catalytic Pros-phosphohistidine intermediate.

It belongs to the NDK family. Homotetramer. Requires Mg(2+) as cofactor.

The protein localises to the cytoplasm. It catalyses the reaction a 2'-deoxyribonucleoside 5'-diphosphate + ATP = a 2'-deoxyribonucleoside 5'-triphosphate + ADP. The catalysed reaction is a ribonucleoside 5'-diphosphate + ATP = a ribonucleoside 5'-triphosphate + ADP. In terms of biological role, major role in the synthesis of nucleoside triphosphates other than ATP. The ATP gamma phosphate is transferred to the NDP beta phosphate via a ping-pong mechanism, using a phosphorylated active-site intermediate. This is Nucleoside diphosphate kinase from Parabacteroides distasonis (strain ATCC 8503 / DSM 20701 / CIP 104284 / JCM 5825 / NCTC 11152).